A 475-amino-acid chain; its full sequence is Ankyrin repeat, SAM and basic leucine zipper domain-containing protein 1 (475 aa).

Residues methionine 1–alanine 10 show a composition bias toward low complexity. The interval methionine 1–aspartate 23 is disordered. Serine 17, serine 18, and serine 20 each carry phosphoserine. 6 ANK repeats span residues glutamate 45–serine 74, tyrosine 78–phenylalanine 107, aspartate 110–valine 144, arginine 148–threonine 177, asparagine 181–leucine 210, and aspartate 214–glycine 243. The SAM domain occupies serine 272–glutamate 334.

In terms of assembly, interacts with DDX4, PIWIL1, RANBP9 and TDRD1.

Its subcellular location is the cytoplasm. Its function is as follows. Plays a central role during spermatogenesis by repressing transposable elements and preventing their mobilization, which is essential for the germline integrity. Acts via the piRNA metabolic process, which mediates the repression of transposable elements during meiosis by forming complexes composed of piRNAs and Piwi proteins and governs the methylation and subsequent repression of transposons. Its association with pi-bodies suggests a participation in the primary piRNAs metabolic process. Required prior to the pachytene stage to facilitate the production of multiple types of piRNAs, including those associated with repeats involved in the regulation of retrotransposons. May act by mediating protein-protein interactions during germ cell maturation. The chain is Ankyrin repeat, SAM and basic leucine zipper domain-containing protein 1 (ASZ1) from Otolemur garnettii (Small-eared galago).